We begin with the raw amino-acid sequence, 514 residues long: Beta-secretase 2 (514 aa).

The signal sequence occupies residues 1–20 (MGALLRALLLPLLAQWLLRA). A propeptide spanning residues 21 to 62 (VPVLAPAPFTLPLQVAGAANHRASTVPGLGTPELPRADGLAL) is cleaved from the precursor. Residues 21–469 (VPVLAPAPFT…NEPILWIVSY (449 aa)) are Extracellular-facing. The region spanning 88-425 (YYLEMLIGTP…DRAQRRVGFA (338 aa)) is the Peptidase A1 domain. The active site involves D106. A glycan (N-linked (GlcNAc...) asparagine) is linked at N166. 3 disulfide bridges follow: C229/C429, C288/C453, and C340/C389. Residue D299 is part of the active site. N-linked (GlcNAc...) asparagine glycosylation is present at N362. The chain crosses the membrane as a helical span at residues 470–490 (ALMSVCGAILLVLILLLLFPL). The Cytoplasmic portion of the chain corresponds to 491-514 (HCRHAPRDPEVVNDESSLVRHRWK).

It belongs to the peptidase A1 family. In terms of assembly, monomer. Interacts with RTN3 and RTN4. In terms of processing, undergoes autoproteolytic cleavage. Post-translationally, glycosylated.

Its subcellular location is the cell membrane. It localises to the golgi apparatus. The protein localises to the endoplasmic reticulum. The protein resides in the endosome. It is found in the melanosome. It carries out the reaction Broad endopeptidase specificity. Cleaves Glu-Val-Asn-Leu-|-Asp-Ala-Glu-Phe in the Swedish variant of Alzheimer's amyloid precursor protein.. Responsible for the proteolytic processing of the amyloid precursor protein (APP). Cleaves APP, between residues 690 and 691, leading to the generation and extracellular release of beta-cleaved soluble APP, and a corresponding cell-associated C-terminal fragment which is later released by gamma-secretase. It has also been shown that it can cleave APP between residues 671 and 672. Involved in the proteolytic shedding of PMEL at early stages of melanosome biogenesis. Cleaves PMEL within the M-beta fragment to release the amyloidogenic PMEL luminal fragment containing M-alpha and a small portion of M-beta N-terminus. This is a prerequisite step for subsequent processing and assembly of PMEL fibrils into amyloid sheets. Responsible also for the proteolytic processing of CLTRN in pancreatic beta cells. This Rattus norvegicus (Rat) protein is Beta-secretase 2 (Bace2).